Here is a 150-residue protein sequence, read N- to C-terminus: UPF0756 membrane protein PMI1560 (150 aa).

Helical transmembrane passes span G16–I36, Y51–G71, F82–A102, and V123–L143.

The protein belongs to the UPF0756 family.

Its subcellular location is the cell membrane. The chain is UPF0756 membrane protein PMI1560 from Proteus mirabilis (strain HI4320).